Here is a 641-residue protein sequence, read N- to C-terminus: Phosphomethylpyrimidine synthase (641 aa).

Substrate-binding positions include N221, M250, Y279, H315, 335–337 (SRG), 376–379 (DGLR), and E415. Residue H419 coordinates Zn(2+). Y442 provides a ligand contact to substrate. H483 contacts Zn(2+). Positions 563, 566, and 571 each coordinate [4Fe-4S] cluster.

It belongs to the ThiC family. In terms of assembly, homodimer. It depends on [4Fe-4S] cluster as a cofactor.

It carries out the reaction 5-amino-1-(5-phospho-beta-D-ribosyl)imidazole + S-adenosyl-L-methionine = 4-amino-2-methyl-5-(phosphooxymethyl)pyrimidine + CO + 5'-deoxyadenosine + formate + L-methionine + 3 H(+). Its pathway is cofactor biosynthesis; thiamine diphosphate biosynthesis. Its function is as follows. Catalyzes the synthesis of the hydroxymethylpyrimidine phosphate (HMP-P) moiety of thiamine from aminoimidazole ribotide (AIR) in a radical S-adenosyl-L-methionine (SAM)-dependent reaction. This chain is Phosphomethylpyrimidine synthase, found in Rhodopseudomonas palustris (strain BisA53).